A 495-amino-acid polypeptide reads, in one-letter code: Formin-like protein 17 (495 aa).

Positions 1 to 92 are disordered; it reads MDIRELIDIT…HNLKGQGQTR (92 aa). Pro residues predominate over residues 19–29; that stretch reads GPPPPPPPPLL. Low complexity predominate over residues 30–39; it reads QPHHSALSSS. One can recognise an FH2 domain in the interval 86-486; the sequence is KGQGQTRKAN…RAQKEAENEK (401 aa).

This sequence belongs to the formin-like family. Class-II subfamily.

The polypeptide is Formin-like protein 17 (FH17) (Arabidopsis thaliana (Mouse-ear cress)).